The chain runs to 2238 residues: RNA-directed RNA polymerase L (2238 aa).

Positions 26–284 (ITLVTCQNDA…THHSEHPVDC (259 aa)) are endonuclease. 3 residues coordinate Mn(2+): Glu-51, Asp-89, and Glu-102. Lys-115 is an active-site residue. Positions 1188–1387 (TDMKMCVNLG…FISTKFNKFV (200 aa)) constitute a RdRp catalytic domain. Residue Asp-1346 coordinates Mg(2+).

It belongs to the Bunyavirales RNA polymerase family. As to quaternary structure, homomultimer; the oligomeric structure is essential for the polymerase activity. Interacts with nucleoprotein N. Interacts with protein Z; this interaction inhibits viral transcription and replication, Z partially blocks the product exit tunnel for the releasing nascent RNA product. The cofactor is Mn(2+). Requires Mg(2+) as cofactor.

It is found in the virion. Its subcellular location is the host cytoplasm. The enzyme catalyses RNA(n) + a ribonucleoside 5'-triphosphate = RNA(n+1) + diphosphate. Functionally, RNA-dependent RNA polymerase, which is responsible for the replication and transcription of the viral RNA genome using antigenomic RNA as an intermediate. During transcription, synthesizes subgenomic RNAs and assures their capping by a cap-snatching mechanism, which involves the endonuclease activity cleaving the host capped pre-mRNAs. These short capped RNAs are then used as primers for viral transcription. The 3'-end of subgenomic mRNAs molecules are heterogeneous and not polyadenylated. The replicase function is to direct synthesis of antigenomic and genomic RNA which are encapsidated and non capped. As a consequence of the use of the same enzyme for both transcription and replication, these mechanisms need to be well coordinated. These processes may be regulated by proteins N and Z in a dose-dependent manner. Z protein inhibits the viral polymerase L und thus the viral transcription and RNA synthesis. The protein is RNA-directed RNA polymerase L of Calomys callosus (Large vesper mouse).